The primary structure comprises 320 residues: Glutathione synthetase (320 aa).

The ATP-grasp domain occupies 127-312 (KLAITEFPRF…VAGLMIDALE (186 aa)). ATP is bound at residue 153-209 (LAEHEDIILKPLDGMGGAGIFRIQNTDHNIGVIIETLTRYGTRTIMAQRFLPEIREG). Residues Glu283 and Asn285 each contribute to the Mg(2+) site.

The protein belongs to the prokaryotic GSH synthase family. Requires Mg(2+) as cofactor. Mn(2+) is required as a cofactor.

It carries out the reaction gamma-L-glutamyl-L-cysteine + glycine + ATP = glutathione + ADP + phosphate + H(+). The protein operates within sulfur metabolism; glutathione biosynthesis; glutathione from L-cysteine and L-glutamate: step 2/2. This is Glutathione synthetase from Nitrosomonas europaea (strain ATCC 19718 / CIP 103999 / KCTC 2705 / NBRC 14298).